Reading from the N-terminus, the 496-residue chain is ATP-dependent protease ATPase subunit HslU2 (496 aa).

The transit peptide at 1 to 10 (MIRFSWVRLC) directs the protein to the mitochondrion. ATP is bound by residues V51 and 94–99 (GVGKTE). Residues 177–191 (GSFGSSTRNSGSGDS) are compositionally biased toward low complexity. The disordered stretch occupies residues 177-204 (GSFGSSTRNSGSGDSSAEEDKNSSSRDN). ATP contacts are provided by D308, E374, and R446.

The protein belongs to the ClpX chaperone family. HslU subfamily. In terms of assembly, a double ring-shaped homohexamer of HslV is capped on each side by a ring-shaped HslU homohexamer. The assembly of the HslU/HslV complex (HslVU) is dependent on binding of ATP.

It is found in the mitochondrion matrix. Its subcellular location is the kinetoplast. Its function is as follows. ATPase subunit of a proteasome-like degradation complex; this subunit has chaperone activity. The binding of ATP and its subsequent hydrolysis by HslU are essential for unfolding of protein substrates subsequently hydrolyzed by HslV. HslU recognizes the N-terminal part of its protein substrates and unfolds these before they are guided to HslV for hydrolysis. The HslVU protease complex functions in mitochondrial DNA replication by regulating DNA helicase PIF2 protein levels. This Trypanosoma brucei brucei (strain 927/4 GUTat10.1) protein is ATP-dependent protease ATPase subunit HslU2 (HslU2).